A 108-amino-acid polypeptide reads, in one-letter code: Precursor of CEP16 (108 aa).

Residues 1–27 (MVMAKNLTKFYVVFLVVLMMVVSLLLA) form the signal peptide. A propeptide spanning residues 28–92 (IEGRPVKDSS…VGHHRAKGYK (65 aa)) is cleaved from the precursor. Residues Asn-50 and Asn-98 are each glycosylated (N-linked (GlcNAc...) asparagine). The interval 76–108 (QSGPSPGVGHHRAKGYKMFGRANDSGPSPGVGH) is disordered. Residues Pro-102 and Pro-104 each carry the hydroxyproline modification.

The protein belongs to the C-terminally encoded plant signaling peptide (CEP) family. As to quaternary structure, interacts with CEP receptors (e.g. CEPR1 and CEPR2). The mature small signaling peptide is generated by proteolytic processing of the longer precursor.

It is found in the secreted. Its subcellular location is the extracellular space. It localises to the apoplast. Its function is as follows. Extracellular signaling peptide that may regulate primary root growth rate and systemic nitrogen (N)-demand signaling. In Arabidopsis thaliana (Mouse-ear cress), this protein is Precursor of CEP16.